A 290-amino-acid chain; its full sequence is Nucleotide-binding protein XF_1405 (290 aa).

13-20 (GLSGSGKS) contributes to the ATP binding site. 65-68 (DIRS) is a GTP binding site.

It belongs to the RapZ-like family.

Functionally, displays ATPase and GTPase activities. This is Nucleotide-binding protein XF_1405 from Xylella fastidiosa (strain 9a5c).